We begin with the raw amino-acid sequence, 969 residues long: Squamosa promoter-binding-like protein 6 (969 aa).

2 disordered regions span residues 1 to 25 (MEAARVGAQSRHLYGGGLGEPDMDR) and 54 to 81 (EASGLALNSSPSSSEEAGAASVRNVNAR). The segment covering 55–74 (ASGLALNSSPSSSEEAGAAS) has biased composition (low complexity). Residues 149–226 (GPACQVEGCT…AGHNRRRRKT (78 aa)) form an SBP-type zinc finger. The Zn(2+) site is built by Cys152, Cys157, Cys174, His177, Cys193, Cys196, His200, and Cys212. The short motif at 209 to 225 (KRSCRRRLAGHNRRRRK) is the Bipartite nuclear localization signal element. Positions 377–434 (GMEGFEDGYEGSPTPAFKTTDSPNCPSWMHQDSTQSPPQTSGNSDSTSAQSLSSSNGD) are disordered. The span at 393 to 419 (FKTTDSPNCPSWMHQDSTQSPPQTSGN) shows a compositional bias: polar residues. Positions 420–431 (SDSTSAQSLSSS) are enriched in low complexity.

Ubiquitous.

Its subcellular location is the nucleus. Its function is as follows. Trans-acting factor that binds specifically to the consensus nucleotide sequence 5'-TNCGTACAA-3'. The chain is Squamosa promoter-binding-like protein 6 (SPL6) from Oryza sativa subsp. japonica (Rice).